The sequence spans 1154 residues: Diacylglycerol kinase eta (1154 aa).

The segment at 1-54 (MAGAGYQHHPPGGAAVGTSAVSPTAAGPGEDSSDSEAEQGGPQKLIRKVSTSGQ) is disordered. Residues 59–152 (TSIKEGQLLK…WISSLKSVQS (94 aa)) enclose the PH domain. 2 Phorbol-ester/DAG-type zinc fingers span residues 169–219 (MHNW…TNNC) and 241–292 (PHQW…HPVC). Positions 322-457 (FCVSPLLVFV…LDRWSIMTYE (136 aa)) constitute a DAGKc domain. Disordered stretches follow at residues 560-608 (QASR…AVKP), 634-678 (DEQT…APEA), and 1123-1154 (FKME…SPGN). Over residues 573 to 586 (PEEDAVESSSEESL) the composition is skewed to acidic residues. Over residues 656–667 (DDSKDNDTKESP) the composition is skewed to basic and acidic residues. A compositionally biased stretch (polar residues) spans 1131–1154 (QKTSSQPGPGDTESGSYEANSPGN).

This sequence belongs to the eukaryotic diacylglycerol kinase family. In terms of assembly, interacts with RAF1 and BRAF. In terms of processing, phosphorylated. Phosphorylation does not inhibit catalytic activity. As to expression, expressed in a wide variety of tissues. Most abundant in the brain and testis; also found in lung, spleen, and prostate (at protein level).

It localises to the cytoplasm. The protein localises to the cell membrane. The enzyme catalyses a 1,2-diacyl-sn-glycerol + ATP = a 1,2-diacyl-sn-glycero-3-phosphate + ADP + H(+). The catalysed reaction is 1,2-di-(9Z-octadecenoyl)-sn-glycerol + ATP = 1,2-di-(9Z-octadecenoyl)-sn-glycero-3-phosphate + ADP + H(+). The protein operates within lipid metabolism; glycerolipid metabolism. Its function is as follows. Diacylglycerol kinase that converts diacylglycerol/DAG into phosphatidic acid/phosphatidate/PA and regulates the respective levels of these two bioactive lipids. Thereby, acts as a central switch between the signaling pathways activated by these second messengers with different cellular targets and opposite effects in numerous biological processes. Plays a key role in promoting cell growth. Activates the Ras/B-Raf/C-Raf/MEK/ERK signaling pathway induced by EGF. Regulates the recruitment of RAF1 and BRAF from cytoplasm to membranes and their heterodimerization. The chain is Diacylglycerol kinase eta (DGKH) from Mesocricetus auratus (Golden hamster).